The primary structure comprises 569 residues: Spermatogenesis-associated protein 16 (569 aa).

Residues 67–92 (KGIKEKQSNDLEKAAFKRKAEGEEKP) show a composition bias toward basic and acidic residues. A disordered region spans residues 67–96 (KGIKEKQSNDLEKAAFKRKAEGEEKPTRKK).

The protein belongs to the SPATA16 family. In terms of tissue distribution, expressed in testis.

The protein resides in the golgi apparatus. It is found in the cytoplasmic vesicle. The protein localises to the secretory vesicle. Its subcellular location is the acrosome. Functionally, essential for spermiogenesis and male fertility. Involved in the formation of sperm acrosome during spermatogenesis. The sequence is that of Spermatogenesis-associated protein 16 (SPATA16) from Homo sapiens (Human).